The sequence spans 252 residues: Thiazole synthase (252 aa).

Residue Lys-91 is the Schiff-base intermediate with DXP of the active site. Residues Gly-152, 179-180 (AG), and 201-202 (NT) contribute to the 1-deoxy-D-xylulose 5-phosphate site.

The protein belongs to the ThiG family. Homotetramer. Forms heterodimers with either ThiH or ThiS.

The protein localises to the cytoplasm. It carries out the reaction [ThiS sulfur-carrier protein]-C-terminal-Gly-aminoethanethioate + 2-iminoacetate + 1-deoxy-D-xylulose 5-phosphate = [ThiS sulfur-carrier protein]-C-terminal Gly-Gly + 2-[(2R,5Z)-2-carboxy-4-methylthiazol-5(2H)-ylidene]ethyl phosphate + 2 H2O + H(+). It functions in the pathway cofactor biosynthesis; thiamine diphosphate biosynthesis. Its function is as follows. Catalyzes the rearrangement of 1-deoxy-D-xylulose 5-phosphate (DXP) to produce the thiazole phosphate moiety of thiamine. Sulfur is provided by the thiocarboxylate moiety of the carrier protein ThiS. In vitro, sulfur can be provided by H(2)S. This Gluconobacter oxydans (strain 621H) (Gluconobacter suboxydans) protein is Thiazole synthase.